A 435-amino-acid chain; its full sequence is Oocyte zinc finger protein XlCOF22 (435 aa).

A disordered region spans residues 71–92 (NANTSAHFSRNRDSDKHERTHT). Residues 80–91 (RNRDSDKHERTH) show a composition bias toward basic and acidic residues. 12 consecutive C2H2-type zinc fingers follow at residues 97–120 (HSCSQCGKCFSSSSDLLAHRRQSH), 126–148 (FSCSECGKCFSFRSRLIDHQRTH), 154–176 (FCCFQCGKSFSVRSRFLDHRRTH), 182–204 (FSCLECGKCFLFRSRLLEHQRTH), 210–232 (FSCLKCGKCFSVRSRLKDHQRTH), 238–260 (FSCLECGKSFSFRPCLIDHQRTH), 266–288 (FSCFQCGKCFSFQSRLINHQRTH), 294–316 (FSCSECGKSFSNQSCLRVHQRTH), 322–345 (YSCSECGKSFVTSSQLAVHRRRTH), 351–373 (FSCSECGKCFSNQSCLRVHQRTH), 379–402 (FSCSECGKSFVTSSKLASHQRQTH), and 408–430 (VSCSECGKCFTRKRSLKVHFKIH).

It belongs to the krueppel C2H2-type zinc-finger protein family.

The protein localises to the nucleus. In terms of biological role, may be involved in transcriptional regulation. The sequence is that of Oocyte zinc finger protein XlCOF22 from Xenopus laevis (African clawed frog).